The sequence spans 116 residues: Large ribosomal subunit protein bL20 (116 aa).

Belongs to the bacterial ribosomal protein bL20 family.

Its function is as follows. Binds directly to 23S ribosomal RNA and is necessary for the in vitro assembly process of the 50S ribosomal subunit. It is not involved in the protein synthesizing functions of that subunit. The polypeptide is Large ribosomal subunit protein bL20 (Mycoplasmopsis pulmonis (strain UAB CTIP) (Mycoplasma pulmonis)).